Reading from the N-terminus, the 311-residue chain is Ribonuclease Z (311 aa).

Zn(2+) is bound by residues histidine 63, histidine 65, aspartate 67, histidine 68, histidine 141, aspartate 212, and histidine 270. Aspartate 67 serves as the catalytic Proton acceptor.

The protein belongs to the RNase Z family. Homodimer. The cofactor is Zn(2+).

It catalyses the reaction Endonucleolytic cleavage of RNA, removing extra 3' nucleotides from tRNA precursor, generating 3' termini of tRNAs. A 3'-hydroxy group is left at the tRNA terminus and a 5'-phosphoryl group is left at the trailer molecule.. In terms of biological role, zinc phosphodiesterase, which displays some tRNA 3'-processing endonuclease activity. Probably involved in tRNA maturation, by removing a 3'-trailer from precursor tRNA. The polypeptide is Ribonuclease Z (Lactiplantibacillus plantarum (strain ATCC BAA-793 / NCIMB 8826 / WCFS1) (Lactobacillus plantarum)).